Here is a 288-residue protein sequence, read N- to C-terminus: Bifunctional protein FolD (288 aa).

NADP(+) is bound by residues 166-168 (GRS), serine 191, and isoleucine 232.

It belongs to the tetrahydrofolate dehydrogenase/cyclohydrolase family. In terms of assembly, homodimer.

It catalyses the reaction (6R)-5,10-methylene-5,6,7,8-tetrahydrofolate + NADP(+) = (6R)-5,10-methenyltetrahydrofolate + NADPH. It carries out the reaction (6R)-5,10-methenyltetrahydrofolate + H2O = (6R)-10-formyltetrahydrofolate + H(+). The protein operates within one-carbon metabolism; tetrahydrofolate interconversion. Functionally, catalyzes the oxidation of 5,10-methylenetetrahydrofolate to 5,10-methenyltetrahydrofolate and then the hydrolysis of 5,10-methenyltetrahydrofolate to 10-formyltetrahydrofolate. The sequence is that of Bifunctional protein FolD from Rickettsia rickettsii (strain Iowa).